We begin with the raw amino-acid sequence, 593 residues long: MESPPLPPACTKQGHQKPLDSKDENPEKHCPLTVNPWHMKKAFKVMNELRSQNLLCDVTIVAEDMEIPAHRVVLAACSPYFHAMFTGEMSESRAKRVRIKEVDGWTLRMLIDYVYTAEIQVTEENVQVLLPAAGLLQLQDVKKTCCEFLESQLHPVNCLGIRAFADMHACTDLLNKANTYAEQHFADVVLSEEFLNLGIEQVCSLISSDKLTISSEEKVFEAVIAWVNHDKDVRQEFMARLMEHVRLPLLPREYLVQRVEEEALVKNSSACKDYLIEAMKYHLLPTEQRMLMKSVRTRLRTPMNLPKLMVVVGGQAPKAIRSVECYDFKEERWHQVAELPSRRCRAGMVYMAGLVFAVGGFNGSLRVRTVDSYDPVKDQWTSVANMRDRRSTLGAAVLNGLLYAVGGFDGSTGLSSVEAYNIKSNEWFHVAPMNTRRSSVGVGVVGGLLYAVGGYDGASRQCLSTVECYNATANEWTYIAEMSTRRSGAGVGVLNNLLYAVGGHDGPLVRKSVEVYDPTTNAWRQVADMNMCRRNAGVCAVNGLLYVVGGDDGSCNLASVEYYNPTTDKWTVVSSCMSTGRSYAGVTVIDKPL.

A disordered region spans residues 1–29; it reads MESPPLPPACTKQGHQKPLDSKDENPEKH. Over residues 17-29 the composition is skewed to basic and acidic residues; it reads KPLDSKDENPEKH. The region spanning 56–123 is the BTB domain; that stretch reads CDVTIVAEDM…VYTAEIQVTE (68 aa). 6 Kelch repeats span residues 308 to 353, 354 to 400, 402 to 447, 449 to 496, 497 to 543, and 545 to 591; these read LMVV…YMAG, LVFA…VLNG, LYAV…VVGG, LYAV…VLNN, LLYA…AVNG, and LYVV…VIDK.

Component of the BCR(KLHL2) E3 ubiquitin ligase complex, at least composed of CUL3 and KLHL2 and RBX1. Binds actin. Interacts with KLHL12. Interacts (via N-terminus) with FYN (via SH3 domain). Detected in brain neurons, oligodendrocytes and astrocytes (at protein level).

It is found in the cytoplasm. It localises to the cytoskeleton. The protein resides in the cell projection. Its subcellular location is the ruffle. The protein localises to the lamellipodium. It is found in the cytosol. The protein operates within protein modification; protein ubiquitination. Substrate-specific adapter of a BCR (BTB-CUL3-RBX1) E3 ubiquitin ligase complex that mediates the ubiquitination of target proteins, such as NPTXR, WNK1, WNK3 and WNK4, leading most often to their proteasomal degradation. The BCR(KLHL2) complex catalyzes ubiquitination and degradation of NPTXR. Responsible for degradative ubiquitination of the WNK kinases WNK1, WNK3 and WNK4. Plays a role in the reorganization of the actin cytoskeleton. Promotes growth of cell projections in oligodendrocyte precursors. In Rattus norvegicus (Rat), this protein is Kelch-like protein 2.